The chain runs to 825 residues: NT-3 growth factor receptor (825 aa).

The signal sequence occupies residues methionine 1 to alanine 31. Disulfide bonds link cysteine 32/cysteine 38 and cysteine 36/cysteine 45. Over cysteine 32–threonine 429 the chain is Extracellular. N-linked (GlcNAc...) asparagine glycosylation is found at asparagine 68, asparagine 72, and asparagine 79. LRR repeat units lie at residues glycine 104–lysine 125 and histidine 128–threonine 149. N-linked (GlcNAc...) asparagine glycans are attached at residues asparagine 133 and asparagine 163. Residues asparagine 160–leucine 209 enclose the LRRCT domain. Intrachain disulfides connect cysteine 164–cysteine 189 and cysteine 166–cysteine 207. 7 N-linked (GlcNAc...) asparagine glycosylation sites follow: asparagine 203, asparagine 218, asparagine 232, asparagine 259, asparagine 267, asparagine 272, and asparagine 294. Ig-like C2-type domains are found at residues proline 210 to threonine 300 and serine 309 to asparagine 382. An intrachain disulfide couples cysteine 231 to cysteine 284. An intrachain disulfide couples cysteine 320 to cysteine 362. Asparagine 375 and asparagine 388 each carry an N-linked (GlcNAc...) asparagine glycan. The helical transmembrane segment at phenylalanine 430 to isoleucine 453 threads the bilayer. At asparagine 454 to glycine 825 the chain is on the cytoplasmic side. Serine 493 is modified (phosphoserine). Tyrosine 516 carries the post-translational modification Phosphotyrosine; by autocatalysis. Positions isoleucine 538–glycine 825 constitute a Protein kinase domain. ATP is bound by residues leucine 544–valine 552 and lysine 572. The active-site Proton acceptor is the aspartate 679. A phosphotyrosine; by autocatalysis mark is found at tyrosine 705, tyrosine 709, and tyrosine 710.

It belongs to the protein kinase superfamily. Tyr protein kinase family. Insulin receptor subfamily. Exists in a dynamic equilibrium between monomeric (low affinity) and dimeric (high affinity) structures. Binds SH2B2. Interacts with SQSTM1 and KIDINS220. Interacts with PTPRS. Interacts with MAPK8IP3/JIP3. Post-translationally, ligand-mediated auto-phosphorylation.

The protein localises to the membrane. It catalyses the reaction L-tyrosyl-[protein] + ATP = O-phospho-L-tyrosyl-[protein] + ADP + H(+). Receptor tyrosine kinase involved in nervous system and probably heart development. Upon binding of its ligand NTF3/neurotrophin-3, NTRK3 autophosphorylates and activates different signaling pathways, including the phosphatidylinositol 3-kinase/AKT and the MAPK pathways, that control cell survival and differentiation. In Pan troglodytes (Chimpanzee), this protein is NT-3 growth factor receptor (NTRK3).